The following is a 163-amino-acid chain: Outer membrane protein assembly factor BamE (163 aa).

A signal peptide spans 1-22 (MINKKQSLTLLSAIALSVSLSA). A lipid anchor (N-palmitoyl cysteine) is attached at C23. C23 is lipidated: S-diacylglycerol cysteine. Residues 122–163 (EQSKLPMVNTTESAPQVPAQRPDEKPLVKENQTEAQVQKPIK) form a disordered region. Residues 142 to 153 (RPDEKPLVKENQ) are compositionally biased toward basic and acidic residues.

The protein belongs to the BamE family. In terms of assembly, part of the Bam complex.

It is found in the cell outer membrane. In terms of biological role, part of the outer membrane protein assembly complex, which is involved in assembly and insertion of beta-barrel proteins into the outer membrane. The sequence is that of Outer membrane protein assembly factor BamE from Shewanella oneidensis (strain ATCC 700550 / JCM 31522 / CIP 106686 / LMG 19005 / NCIMB 14063 / MR-1).